We begin with the raw amino-acid sequence, 549 residues long: Cytoplasmic trehalase (549 aa).

Substrate-binding positions include arginine 168, 175-176 (WD), asparagine 212, 221-223 (RSQ), 292-294 (RDE), and glycine 324. Catalysis depends on proton donor/acceptor residues aspartate 326 and glutamate 509. Glutamate 525 is a binding site for substrate.

It belongs to the glycosyl hydrolase 37 family. As to quaternary structure, monomer.

It is found in the cytoplasm. It catalyses the reaction alpha,alpha-trehalose + H2O = alpha-D-glucose + beta-D-glucose. The protein operates within glycan degradation; trehalose degradation; D-glucose from alpha,alpha-trehalose: step 1/1. Functionally, hydrolyzes trehalose to glucose. Could be involved, in cells returning to low osmolarity conditions, in the utilization of the accumulated cytoplasmic trehalose, which was synthesized in response to high osmolarity. This is Cytoplasmic trehalase from Shigella boydii serotype 4 (strain Sb227).